A 448-amino-acid chain; its full sequence is Fumarate hydratase class II (448 aa).

Substrate-binding positions include Ser83–Thr85, His113–Asp116, Ser123–Asn125, and Thr171. Residue His172 is the Proton donor/acceptor of the active site. Ser302 is a catalytic residue. Substrate contacts are provided by residues Ser303 and Lys308–Asn310.

It belongs to the class-II fumarase/aspartase family. Fumarase subfamily. In terms of assembly, homotetramer.

The protein localises to the cytoplasm. It carries out the reaction (S)-malate = fumarate + H2O. Its pathway is carbohydrate metabolism; tricarboxylic acid cycle; (S)-malate from fumarate: step 1/1. In terms of biological role, involved in the TCA cycle. Catalyzes the stereospecific interconversion of fumarate to L-malate. The chain is Fumarate hydratase class II from Blochmanniella floridana.